The following is a 616-amino-acid chain: Dihydroxy-acid dehydratase (616 aa).

Position 81 (Asp81) interacts with Mg(2+). Cys122 lines the [2Fe-2S] cluster pocket. Mg(2+)-binding residues include Asp123 and Lys124. The residue at position 124 (Lys124) is an N6-carboxylysine. Position 195 (Cys195) interacts with [2Fe-2S] cluster. A Mg(2+)-binding site is contributed by Glu491. Ser517 functions as the Proton acceptor in the catalytic mechanism.

It belongs to the IlvD/Edd family. In terms of assembly, homodimer. Requires [2Fe-2S] cluster as cofactor. It depends on Mg(2+) as a cofactor.

It carries out the reaction (2R)-2,3-dihydroxy-3-methylbutanoate = 3-methyl-2-oxobutanoate + H2O. The catalysed reaction is (2R,3R)-2,3-dihydroxy-3-methylpentanoate = (S)-3-methyl-2-oxopentanoate + H2O. It participates in amino-acid biosynthesis; L-isoleucine biosynthesis; L-isoleucine from 2-oxobutanoate: step 3/4. The protein operates within amino-acid biosynthesis; L-valine biosynthesis; L-valine from pyruvate: step 3/4. Functions in the biosynthesis of branched-chain amino acids. Catalyzes the dehydration of (2R,3R)-2,3-dihydroxy-3-methylpentanoate (2,3-dihydroxy-3-methylvalerate) into 2-oxo-3-methylpentanoate (2-oxo-3-methylvalerate) and of (2R)-2,3-dihydroxy-3-methylbutanoate (2,3-dihydroxyisovalerate) into 2-oxo-3-methylbutanoate (2-oxoisovalerate), the penultimate precursor to L-isoleucine and L-valine, respectively. The chain is Dihydroxy-acid dehydratase from Erwinia tasmaniensis (strain DSM 17950 / CFBP 7177 / CIP 109463 / NCPPB 4357 / Et1/99).